The sequence spans 130 residues: Small ribosomal subunit protein uS11 (130 aa).

This sequence belongs to the universal ribosomal protein uS11 family. Part of the 30S ribosomal subunit. Interacts with proteins S7 and S18. Binds to IF-3.

Functionally, located on the platform of the 30S subunit, it bridges several disparate RNA helices of the 16S rRNA. Forms part of the Shine-Dalgarno cleft in the 70S ribosome. The protein is Small ribosomal subunit protein uS11 of Prochlorococcus marinus (strain NATL2A).